We begin with the raw amino-acid sequence, 503 residues long: Transcription termination/antitermination protein NusA (503 aa).

The S1 motif domain occupies 140 to 206 (GELVIGVVKR…RGPQLLVSRT (67 aa)). Positions 308–374 (SHTMDIAVNK…FMEKLDVDEE (67 aa)) constitute a KH domain.

This sequence belongs to the NusA family. As to quaternary structure, monomer. Binds directly to the core enzyme of the DNA-dependent RNA polymerase and to nascent RNA.

It is found in the cytoplasm. Functionally, participates in both transcription termination and antitermination. This Coxiella burnetii (strain RSA 493 / Nine Mile phase I) protein is Transcription termination/antitermination protein NusA.